We begin with the raw amino-acid sequence, 234 residues long: Ubiquinone biosynthesis O-methyltransferase (234 aa).

Arginine 37, glycine 56, aspartate 77, and methionine 121 together coordinate S-adenosyl-L-methionine.

Belongs to the methyltransferase superfamily. UbiG/COQ3 family.

It carries out the reaction a 3-demethylubiquinol + S-adenosyl-L-methionine = a ubiquinol + S-adenosyl-L-homocysteine + H(+). The catalysed reaction is a 3-(all-trans-polyprenyl)benzene-1,2-diol + S-adenosyl-L-methionine = a 2-methoxy-6-(all-trans-polyprenyl)phenol + S-adenosyl-L-homocysteine + H(+). Its pathway is cofactor biosynthesis; ubiquinone biosynthesis. In terms of biological role, O-methyltransferase that catalyzes the 2 O-methylation steps in the ubiquinone biosynthetic pathway. This Aromatoleum aromaticum (strain DSM 19018 / LMG 30748 / EbN1) (Azoarcus sp. (strain EbN1)) protein is Ubiquinone biosynthesis O-methyltransferase.